The primary structure comprises 419 residues: Tyrosine--tRNA ligase (419 aa).

Residue Tyr-34 coordinates L-tyrosine. The short motif at 39–48 is the 'HIGH' region element; that stretch reads PTADSLHLGN. L-tyrosine contacts are provided by Tyr-169 and Gln-173. A 'KMSKS' region motif is present at residues 229 to 233; that stretch reads KFGKS. Lys-232 serves as a coordination point for ATP. In terms of domain architecture, S4 RNA-binding spans 353 to 419; the sequence is LTLIELLISV…GKKKNFVLTY (67 aa).

Belongs to the class-I aminoacyl-tRNA synthetase family. TyrS type 1 subfamily. Homodimer.

The protein localises to the cytoplasm. It catalyses the reaction tRNA(Tyr) + L-tyrosine + ATP = L-tyrosyl-tRNA(Tyr) + AMP + diphosphate + H(+). Catalyzes the attachment of tyrosine to tRNA(Tyr) in a two-step reaction: tyrosine is first activated by ATP to form Tyr-AMP and then transferred to the acceptor end of tRNA(Tyr). The chain is Tyrosine--tRNA ligase from Lactococcus lactis subsp. cremoris (strain MG1363).